The primary structure comprises 256 residues: Pimeloyl-[acyl-carrier protein] methyl ester esterase (256 aa).

The region spanning 15–242 (HLVLLHGWGL…AAHAPFISHP (228 aa)) is the AB hydrolase-1 domain. Substrate-binding positions include W22, 82–83 (SL), and 143–147 (FLALQ). The active-site Nucleophile is S82. Residues D207 and H235 contribute to the active site. Residue H235 participates in substrate binding.

This sequence belongs to the AB hydrolase superfamily. Carboxylesterase BioH family. In terms of assembly, monomer.

The protein localises to the cytoplasm. It catalyses the reaction 6-carboxyhexanoyl-[ACP] methyl ester + H2O = 6-carboxyhexanoyl-[ACP] + methanol + H(+). The protein operates within cofactor biosynthesis; biotin biosynthesis. Its function is as follows. The physiological role of BioH is to remove the methyl group introduced by BioC when the pimeloyl moiety is complete. It allows to synthesize pimeloyl-ACP via the fatty acid synthetic pathway through the hydrolysis of the ester bonds of pimeloyl-ACP esters. This is Pimeloyl-[acyl-carrier protein] methyl ester esterase from Citrobacter koseri (strain ATCC BAA-895 / CDC 4225-83 / SGSC4696).